The chain runs to 430 residues: Serine--tRNA ligase (430 aa).

Position 235–237 (Thr-235–Glu-237) interacts with L-serine. Residues Arg-266–Glu-268 and Val-282 each bind ATP. Glu-289 is a binding site for L-serine. ATP is bound at residue Glu-353–Ser-356. Residue Ser-389 coordinates L-serine.

Belongs to the class-II aminoacyl-tRNA synthetase family. Type-1 seryl-tRNA synthetase subfamily. In terms of assembly, homodimer. The tRNA molecule binds across the dimer.

It is found in the cytoplasm. The enzyme catalyses tRNA(Ser) + L-serine + ATP = L-seryl-tRNA(Ser) + AMP + diphosphate + H(+). The catalysed reaction is tRNA(Sec) + L-serine + ATP = L-seryl-tRNA(Sec) + AMP + diphosphate + H(+). The protein operates within aminoacyl-tRNA biosynthesis; selenocysteinyl-tRNA(Sec) biosynthesis; L-seryl-tRNA(Sec) from L-serine and tRNA(Sec): step 1/1. Catalyzes the attachment of serine to tRNA(Ser). Is also able to aminoacylate tRNA(Sec) with serine, to form the misacylated tRNA L-seryl-tRNA(Sec), which will be further converted into selenocysteinyl-tRNA(Sec). The polypeptide is Serine--tRNA ligase (Chlorobium phaeovibrioides (strain DSM 265 / 1930) (Prosthecochloris vibrioformis (strain DSM 265))).